The primary structure comprises 198 residues: Holliday junction resolvase RecU (198 aa).

Positions 83, 85, 98, and 117 each coordinate Mg(2+).

Belongs to the RecU family. Requires Mg(2+) as cofactor.

The protein localises to the cytoplasm. It catalyses the reaction Endonucleolytic cleavage at a junction such as a reciprocal single-stranded crossover between two homologous DNA duplexes (Holliday junction).. In terms of biological role, endonuclease that resolves Holliday junction intermediates in genetic recombination. Cleaves mobile four-strand junctions by introducing symmetrical nicks in paired strands. Promotes annealing of linear ssDNA with homologous dsDNA. Required for DNA repair, homologous recombination and chromosome segregation. The sequence is that of Holliday junction resolvase RecU from Streptococcus thermophilus (strain CNRZ 1066).